Here is a 540-residue protein sequence, read N- to C-terminus: Chaperonin GroEL (540 aa).

Residues 30-33 (TLGP), Lys-51, 87-91 (DGTTT), Gly-415, and Asp-496 contribute to the ATP site.

The protein belongs to the chaperonin (HSP60) family. In terms of assembly, forms a cylinder of 14 subunits composed of two heptameric rings stacked back-to-back. Interacts with the co-chaperonin GroES.

It localises to the cytoplasm. It catalyses the reaction ATP + H2O + a folded polypeptide = ADP + phosphate + an unfolded polypeptide.. Together with its co-chaperonin GroES, plays an essential role in assisting protein folding. The GroEL-GroES system forms a nano-cage that allows encapsulation of the non-native substrate proteins and provides a physical environment optimized to promote and accelerate protein folding. The sequence is that of Chaperonin GroEL from Thermodesulfovibrio yellowstonii (strain ATCC 51303 / DSM 11347 / YP87).